Reading from the N-terminus, the 179-residue chain is Large ribosomal subunit protein uL5 (179 aa).

This sequence belongs to the universal ribosomal protein uL5 family. As to quaternary structure, part of the 50S ribosomal subunit; part of the 5S rRNA/L5/L18/L25 subcomplex. Contacts the 5S rRNA and the P site tRNA. Forms a bridge to the 30S subunit in the 70S ribosome.

Its function is as follows. This is one of the proteins that bind and probably mediate the attachment of the 5S RNA into the large ribosomal subunit, where it forms part of the central protuberance. In the 70S ribosome it contacts protein S13 of the 30S subunit (bridge B1b), connecting the 2 subunits; this bridge is implicated in subunit movement. Contacts the P site tRNA; the 5S rRNA and some of its associated proteins might help stabilize positioning of ribosome-bound tRNAs. The protein is Large ribosomal subunit protein uL5 of Geobacter sp. (strain M21).